The primary structure comprises 461 residues: Fumarate hydratase class II (461 aa).

Substrate-binding positions include 97–99 (SGT), 127–130 (HPND), 137–139 (SSN), and threonine 185. The active-site Proton donor/acceptor is histidine 186. Serine 316 is a catalytic residue. Substrate is bound by residues serine 317 and 322–324 (KVN).

This sequence belongs to the class-II fumarase/aspartase family. Fumarase subfamily. As to quaternary structure, homotetramer.

The protein localises to the cytoplasm. The enzyme catalyses (S)-malate = fumarate + H2O. Its pathway is carbohydrate metabolism; tricarboxylic acid cycle; (S)-malate from fumarate: step 1/1. Involved in the TCA cycle. Catalyzes the stereospecific interconversion of fumarate to L-malate. The protein is Fumarate hydratase class II of Staphylococcus haemolyticus (strain JCSC1435).